An 894-amino-acid polypeptide reads, in one-letter code: CWF19-like protein 2 (894 aa).

The tract at residues 1 to 147 (MATSMAAASG…DEKSGKDDTQ (147 aa)) is disordered. The segment covering 13-56 (ESAKSIEERKEQTRNARAEVLRQAKANFEKEERRKELKRLRGED) has biased composition (basic and acidic residues). Positions 13 to 107 (ESAKSIEERK…KKQKYEKNNE (95 aa)) form a coiled coil. Serine 75 is modified (phosphoserine). A compositionally biased stretch (basic residues) spans 76–99 (VKKKKKKDKHSKKAKKEKKKKSKK). Over residues 128–147 (PDKEKAWKVKDEKSGKDDTQ) the composition is skewed to basic and acidic residues. Residues 166–281 (SSSSLKAEKE…AEKAASTKED (116 aa)) are a coiled coil. Lysine 171 participates in a covalent cross-link: Glycyl lysine isopeptide (Lys-Gly) (interchain with G-Cter in SUMO2). Over residues 270-284 (EDAEKAASTKEDYRR) the composition is skewed to basic and acidic residues. Residues 270-483 (EDAEKAASTK…STFAGSPERE (214 aa)) are disordered. The segment covering 320–330 (TTDTAKNSNNE) has biased composition (polar residues). The span at 332-352 (FIGDEKDKRPGSLETCRRESN) shows a compositional bias: basic and acidic residues. Phosphoserine is present on residues serine 360 and serine 372. 2 stretches are compositionally biased toward basic and acidic residues: residues 410–430 (KNSEERLTSWSRSDGRGDKKH) and 440–473 (TDEHQHVPEDPREKSQDEVLRDDPPKKEHLRDTK). Phosphoserine occurs at positions 479 and 484. A coiled-coil region spans residues 502 to 530 (KAEMMGNMELAEQLKVQLEKANKFKETIT). A disordered region spans residues 561-583 (NTPGKSLESQGGRRKRQMVSTHE). Lysine 604 participates in a covalent cross-link: Glycyl lysine isopeptide (Lys-Gly) (interchain with G-Cter in SUMO2). Residues 644-675 (AAERERLGEEEENQRKKAIAEHRSLAAQMEKC) adopt a coiled-coil conformation.

The protein belongs to the CWF19 family.

The chain is CWF19-like protein 2 (CWF19L2) from Homo sapiens (Human).